A 517-amino-acid polypeptide reads, in one-letter code: Optineurin (517 aa).

Coiled-coil stretches lie at residues 15 to 127 (NLGS…DLVA) and 174 to 453 (KAES…LGRH). Disordered regions lie at residues 216–237 (KLEHADSSAQTSLPSAAETNAS) and 454–488 (SMSEMQRRHVPRGANPQGPTAPNNLPGGRGEWQQQ). Polar residues predominate over residues 222–237 (SSAQTSLPSAAETNAS). A CCHC NOA-type zinc finger spans residues 487–517 (QQNIPDHACPKCGEVLPDLDSLQIHIMDCII). Residues Cys495, Cys498, His511, and Cys515 each coordinate Zn(2+).

Its subcellular location is the cytoplasm. It localises to the perinuclear region. It is found in the golgi apparatus. The protein localises to the trans-Golgi network. The protein resides in the cytoplasmic vesicle. Its subcellular location is the recycling endosome. It localises to the autophagosome. Probably part of the TNF-alpha signaling pathway that can shift the equilibrium toward induction of cell death. May act by regulating membrane trafficking and cellular morphogenesis. This is Optineurin (optn) from Danio rerio (Zebrafish).